The chain runs to 310 residues: Glutaminase (310 aa).

The substrate site is built by Ser-66, Asn-117, Glu-161, Asn-168, Tyr-192, Tyr-244, and Val-262.

Belongs to the glutaminase family. As to quaternary structure, homotetramer.

The enzyme catalyses L-glutamine + H2O = L-glutamate + NH4(+). This Shigella boydii serotype 4 (strain Sb227) protein is Glutaminase.